An 814-amino-acid polypeptide reads, in one-letter code: DNA topoisomerase 1 (814 aa).

The span at 1–12 (MSSSDSDSVSLS) shows a compositional bias: low complexity. The segment at 1–180 (MSSSDSDSVS…PNDEEDEDED (180 aa)) is disordered. Positions 13–22 (IRRRQRRGSS) are enriched in basic residues. Phosphoserine is present on residues serine 52, serine 54, and serine 136. Phosphothreonine is present on threonine 138. Interaction with DNA regions lie at residues 404-405 (KY), 467-472 (RAGNEK), and 559-561 (SAK). The 404-residue stretch at 411 to 814 (GSSLKGQSDL…AADTPPDWKW (404 aa)) folds into the Topo IB-type catalytic domain. Tyrosine 773 serves as the catalytic O-(3'-phospho-DNA)-tyrosine intermediate.

This sequence belongs to the type IB topoisomerase family. Monomer.

It carries out the reaction ATP-independent breakage of single-stranded DNA, followed by passage and rejoining.. Releases the supercoiling and torsional tension of DNA introduced during the DNA replication and transcription by transiently cleaving and rejoining one strand of the DNA duplex. Introduces a single-strand break via transesterification at a target site in duplex DNA. The scissile phosphodiester is attacked by the catalytic tyrosine of the enzyme, resulting in the formation of a DNA-(3'-phosphotyrosyl)-enzyme intermediate and the expulsion of a 5'-OH DNA strand. TThe free DNA strand then rotates around the intact phosphodiester bond on the opposing strand, thus removing DNA supercoils. Finally, in the religation step, the DNA 5'-OH attacks the covalent intermediate to expel the active-site tyrosine and restore the DNA phosphodiester backbone. This Schizosaccharomyces pombe (strain 972 / ATCC 24843) (Fission yeast) protein is DNA topoisomerase 1 (top1).